We begin with the raw amino-acid sequence, 148 residues long: Aspartate 1-decarboxylase (148 aa).

The active-site Schiff-base intermediate with substrate; via pyruvic acid is Ser25. Ser25 carries the post-translational modification Pyruvic acid (Ser). Thr57 serves as a coordination point for substrate. Catalysis depends on Tyr58, which acts as the Proton donor. 73–75 (GAA) lines the substrate pocket.

Belongs to the PanD family. Heterooctamer of four alpha and four beta subunits. Requires pyruvate as cofactor. In terms of processing, is synthesized initially as an inactive proenzyme, which is activated by self-cleavage at a specific serine bond to produce a beta-subunit with a hydroxyl group at its C-terminus and an alpha-subunit with a pyruvoyl group at its N-terminus.

The protein localises to the cytoplasm. The catalysed reaction is L-aspartate + H(+) = beta-alanine + CO2. The protein operates within cofactor biosynthesis; (R)-pantothenate biosynthesis; beta-alanine from L-aspartate: step 1/1. Functionally, catalyzes the pyruvoyl-dependent decarboxylation of aspartate to produce beta-alanine. In Rhodococcus opacus (strain B4), this protein is Aspartate 1-decarboxylase.